Reading from the N-terminus, the 237-residue chain is Sugar fermentation stimulation protein homolog (237 aa).

It belongs to the SfsA family.

The polypeptide is Sugar fermentation stimulation protein homolog (Pseudomonas fluorescens (strain Pf0-1)).